A 302-amino-acid chain; its full sequence is Citrate lyase subunit beta (302 aa).

Substrate is bound by residues Arg69 and Glu132. Residues Glu132 and Asp159 each coordinate Mg(2+).

It belongs to the HpcH/HpaI aldolase family. Citrate lyase beta subunit subfamily. As to quaternary structure, oligomer with a subunit composition of (alpha,beta,gamma)6. Mg(2+) serves as cofactor.

It localises to the cytoplasm. It carries out the reaction citrate = oxaloacetate + acetate. It catalyses the reaction (3S)-citryl-CoA = oxaloacetate + acetyl-CoA. Its function is as follows. Represents a citryl-ACP lyase. The polypeptide is Citrate lyase subunit beta (citE) (Leuconostoc mesenteroides subsp. cremoris).